The sequence spans 193 residues: Large ribosomal subunit protein uL5 (193 aa).

It belongs to the universal ribosomal protein uL5 family. In terms of assembly, part of the 50S ribosomal subunit; part of the 5S rRNA/L5/L18/L25 subcomplex. Contacts the 5S rRNA and the P site tRNA. Forms a bridge to the 30S subunit in the 70S ribosome.

This is one of the proteins that bind and probably mediate the attachment of the 5S RNA into the large ribosomal subunit, where it forms part of the central protuberance. In the 70S ribosome it contacts protein S13 of the 30S subunit (bridge B1b), connecting the 2 subunits; this bridge is implicated in subunit movement. Contacts the P site tRNA; the 5S rRNA and some of its associated proteins might help stabilize positioning of ribosome-bound tRNAs. The polypeptide is Large ribosomal subunit protein uL5 (Arthrobacter sp. (strain FB24)).